The following is a 313-amino-acid chain: tRNA-cytidine(32) 2-sulfurtransferase (313 aa).

Residues 47 to 52 (SGGKDS) carry the PP-loop motif motif. [4Fe-4S] cluster is bound by residues C122, C125, and C213. The disordered stretch occupies residues 288-313 (PVGWQPEDDEDTEKRPPVRLDVLEIK). Basic and acidic residues predominate over residues 299–313 (TEKRPPVRLDVLEIK).

It belongs to the TtcA family. Homodimer. Mg(2+) serves as cofactor. [4Fe-4S] cluster is required as a cofactor.

Its subcellular location is the cytoplasm. It catalyses the reaction cytidine(32) in tRNA + S-sulfanyl-L-cysteinyl-[cysteine desulfurase] + AH2 + ATP = 2-thiocytidine(32) in tRNA + L-cysteinyl-[cysteine desulfurase] + A + AMP + diphosphate + H(+). It functions in the pathway tRNA modification. Functionally, catalyzes the ATP-dependent 2-thiolation of cytidine in position 32 of tRNA, to form 2-thiocytidine (s(2)C32). The sulfur atoms are provided by the cysteine/cysteine desulfurase (IscS) system. This chain is tRNA-cytidine(32) 2-sulfurtransferase, found in Yersinia pseudotuberculosis serotype O:1b (strain IP 31758).